A 90-amino-acid polypeptide reads, in one-letter code: Succinate dehydrogenase subunit 7, mitochondrial (90 aa).

Residues 1 to 41 (MAQPAFLSALRSRLRSPQPQAPALPHLQPPRRGFHVELGAR) constitute a mitochondrion transit peptide.

In terms of assembly, component of complex II composed of eight subunits in plants: four classical SDH subunits SDH1, SDH2, SDH3 and SDH4 (a flavoprotein (FP), an iron-sulfur protein (IP), and a cytochrome b composed of a large and a small subunit.), as well as four subunits unknown in mitochondria from bacteria and heterotrophic eukaryotes.

The protein localises to the mitochondrion inner membrane. It functions in the pathway carbohydrate metabolism; tricarboxylic acid cycle. In Oryza sativa subsp. japonica (Rice), this protein is Succinate dehydrogenase subunit 7, mitochondrial.